Consider the following 512-residue polypeptide: D-alanine--D-alanyl carrier protein ligase (512 aa).

152–153 is an ATP binding site; the sequence is TS. Residue aspartate 199 coordinates D-alanine. Residue 294–299 participates in ATP binding; that stretch reads NAYGPT. Valine 303 contacts D-alanine. ATP is bound by residues aspartate 385, 397–400, and lysine 499; that span reads YGGR. Lysine 499 is a binding site for D-alanine.

This sequence belongs to the ATP-dependent AMP-binding enzyme family. DltA subfamily.

Its subcellular location is the cytoplasm. It catalyses the reaction holo-[D-alanyl-carrier protein] + D-alanine + ATP = D-alanyl-[D-alanyl-carrier protein] + AMP + diphosphate. It functions in the pathway cell wall biogenesis; lipoteichoic acid biosynthesis. Its function is as follows. Catalyzes the first step in the D-alanylation of lipoteichoic acid (LTA), the activation of D-alanine and its transfer onto the D-alanyl carrier protein (Dcp) DltC. In an ATP-dependent two-step reaction, forms a high energy D-alanyl-AMP intermediate, followed by transfer of the D-alanyl residue as a thiol ester to the phosphopantheinyl prosthetic group of the Dcp. D-alanylation of LTA plays an important role in modulating the properties of the cell wall in Gram-positive bacteria, influencing the net charge of the cell wall. This chain is D-alanine--D-alanyl carrier protein ligase, found in Streptococcus pyogenes serotype M49 (strain NZ131).